The sequence spans 230 residues: LexA repressor (230 aa).

The tract at residues methionine 1 to threonine 21 is disordered. Residues isoleucine 44–arginine 64 constitute a DNA-binding region (H-T-H motif). Active-site for autocatalytic cleavage activity residues include serine 154 and lysine 191.

The protein belongs to the peptidase S24 family. Homodimer.

It carries out the reaction Hydrolysis of Ala-|-Gly bond in repressor LexA.. Functionally, represses a number of genes involved in the response to DNA damage (SOS response), including recA and lexA. In the presence of single-stranded DNA, RecA interacts with LexA causing an autocatalytic cleavage which disrupts the DNA-binding part of LexA, leading to derepression of the SOS regulon and eventually DNA repair. The chain is LexA repressor from Mycobacterium sp. (strain JLS).